The following is a 200-amino-acid chain: Elongation factor Ts (200 aa).

The involved in Mg(2+) ion dislocation from EF-Tu stretch occupies residues 83 to 86 (TDFA).

The protein belongs to the EF-Ts family.

It localises to the cytoplasm. Functionally, associates with the EF-Tu.GDP complex and induces the exchange of GDP to GTP. It remains bound to the aminoacyl-tRNA.EF-Tu.GTP complex up to the GTP hydrolysis stage on the ribosome. In Syntrophobacter fumaroxidans (strain DSM 10017 / MPOB), this protein is Elongation factor Ts.